The following is a 240-amino-acid chain: Ribonuclease PH (240 aa).

Phosphate is bound by residues R87 and G125 to R127.

It belongs to the RNase PH family. As to quaternary structure, homohexameric ring arranged as a trimer of dimers.

It carries out the reaction tRNA(n+1) + phosphate = tRNA(n) + a ribonucleoside 5'-diphosphate. Functionally, phosphorolytic 3'-5' exoribonuclease that plays an important role in tRNA 3'-end maturation. Removes nucleotide residues following the 3'-CCA terminus of tRNAs; can also add nucleotides to the ends of RNA molecules by using nucleoside diphosphates as substrates, but this may not be physiologically important. Probably plays a role in initiation of 16S rRNA degradation (leading to ribosome degradation) during starvation. The protein is Ribonuclease PH of Pseudomonas fluorescens (strain SBW25).